The chain runs to 2313 residues: Voltage-dependent R-type calcium channel subunit alpha-1E (2313 aa).

The disordered stretch occupies residues Met1 to Ala38. Topologically, residues Met1–Pro89 are cytoplasmic. Residues Ser14 and Ser19 each carry the phosphoserine modification. The I repeat unit spans residues Asn76 to Phe354. The helical transmembrane segment at Pro90–Leu108 threads the bilayer. Residues Glu109–Thr127 lie on the Extracellular side of the membrane. Residues Glu128–Leu146 traverse the membrane as a helical segment. At Gly147–Asn158 the chain is on the cytoplasmic side. The chain crosses the membrane as a helical span at residues Gly159–Leu173. Residues Ala174–Asp185 are Extracellular-facing. A helical transmembrane segment spans residues Leu186–Pro205. At Ser206–Gln223 the chain is on the cytoplasmic side. The helical transmembrane segment at Ile224 to Ser244 threads the bilayer. Over Gly245 to Trp326 the chain is Extracellular. N-linked (GlcNAc...) asparagine glycosylation occurs at Asn254. The helical transmembrane segment at Asn327–Leu350 threads the bilayer. Topologically, residues Ser351–Gln476 are cytoplasmic. The binding to the beta subunit stretch occupies residues Gln374–Glu391. Asp426 contacts Ca(2+). The residue at position 427 (Ser427) is a Phosphoserine. Ser428, Glu430, and Cys432 together coordinate Ca(2+). At Thr440 the chain carries Phosphothreonine. The stretch at Glu462 to Leu706 is one II repeat. The chain crosses the membrane as a helical span at residues Val477 to Val496. The Extracellular portion of the chain corresponds to His497–Tyr509. The chain crosses the membrane as a helical span at residues Tyr510–Gly529. Residues Met530 to Ser538 lie on the Cytoplasmic side of the membrane. Residues Ser539–Trp557 form a helical membrane-spanning segment. The Extracellular segment spans residues Ala558–Gly567. A helical transmembrane segment spans residues Ile568–Trp586. Residues Ala587–Ser605 lie on the Cytoplasmic side of the membrane. The helical transmembrane segment at Leu606–Phe625 threads the bilayer. Topologically, residues Gly626–Trp678 are extracellular. A helical transmembrane segment spans residues Ser679 to Val703. Over Asp704–Tyr1148 the chain is Cytoplasmic. The disordered stretch occupies residues Leu729–His774. Ser736, Ser745, Ser793, Ser815, and Ser855 each carry phosphoserine. The disordered stretch occupies residues Ser851–Thr984. Residues Ala866 to Ser875 are compositionally biased toward polar residues. Positions Arg913–Val926 are enriched in basic residues. Low complexity predominate over residues Ser933–Glu945. At Ser947 the chain carries Phosphoserine. Positions Glu955 to Arg983 are enriched in basic and acidic residues. Position 1097 is a phosphoserine (Ser1097). Positions Glu1103 to Lys1125 are disordered. An III repeat occupies Asn1140–Phe1426. Residues Ile1149 to Ala1165 traverse the membrane as a helical segment. The Extracellular portion of the chain corresponds to Ser1166–Phe1189. A helical membrane pass occupies residues Asp1190–Gly1209. The Cytoplasmic portion of the chain corresponds to Leu1210–Tyr1217. The chain crosses the membrane as a helical span at residues Phe1218–Ala1240. Residues Asn1241–Ile1254 lie on the Extracellular side of the membrane. The chain crosses the membrane as a helical span at residues Lys1255–Leu1272. Topologically, residues Pro1273–Asn1291 are cytoplasmic. Residues Ile1292 to Phe1311 traverse the membrane as a helical segment. Topologically, residues Lys1312–Glu1398 are extracellular. The chain crosses the membrane as a helical span at residues Met1399 to Ile1422. The Cytoplasmic portion of the chain corresponds to Ile1423–Ser1479. An IV repeat occupies Asn1463–Phe1726. Residues Phe1480–Lys1498 form a helical membrane-spanning segment. The Extracellular segment spans residues Tyr1499–Leu1513. Residues Asn1514–Gly1533 traverse the membrane as a helical segment. The Cytoplasmic portion of the chain corresponds to Phe1534–Thr1541. Residues Trp1542–Thr1560 form a helical membrane-spanning segment. The Extracellular segment spans residues Asp1561–Asn1571. N-linked (GlcNAc...) asparagine glycosylation is found at Asn1566 and Asn1571. The chain crosses the membrane as a helical span at residues Met1572–Gly1590. Over Tyr1591–Tyr1609 the chain is Cytoplasmic. A helical transmembrane segment spans residues Val1610–Phe1629. The Extracellular portion of the chain corresponds to Gly1630–Leu1698. Residues Ala1699 to Asp1724 form a helical membrane-spanning segment. At Asn1725–Cys2313 the chain is on the cytoplasmic side. The region spanning His1739–Pro1774 is the EF-hand domain. The Ca(2+) site is built by Asp1752, Arg1758, and Glu1763. Disordered stretches follow at residues Val1970–Leu2170, Cys2206–Gln2225, and Ser2263–Met2295. The segment covering Thr2012 to Thr2023 has biased composition (polar residues). A compositionally biased stretch (low complexity) spans His2055 to Arg2064. Positions Leu2065 to Arg2085 are enriched in basic and acidic residues. Phosphoserine is present on residues Ser2094 and Ser2113. The span at Asn2101–Gln2118 shows a compositional bias: basic and acidic residues. Residues Thr2129–Pro2152 show a composition bias toward polar residues. Positions Ser2210–Gln2225 are enriched in low complexity.

Belongs to the calcium channel alpha-1 subunit (TC 1.A.1.11) family. CACNA1E subfamily. Interacts with EFHC1. Voltage-dependent calcium channels are multisubunit complexes, consisting of alpha-1, alpha-2, beta and delta subunits in a 1:1:1:1 ratio. The channel activity is directed by the pore-forming and voltage-sensitive alpha-1 subunit. In many cases, this subunit is sufficient to generate voltage-sensitive calcium channel activity. The auxiliary subunits beta and alpha-2/delta linked by a disulfide bridge regulate the channel activity. In terms of tissue distribution, expressed in neuronal tissues and in kidney.

It is found in the membrane. It carries out the reaction Ca(2+)(in) = Ca(2+)(out). Its function is as follows. Voltage-sensitive calcium channels (VSCC) mediate the entry of calcium ions into excitable cells. They are also involved in a variety of calcium-dependent processes, including muscle contraction, hormone or neurotransmitter release, gene expression, cell motility, cell division and cell death. The isoform alpha-1E gives rise to R-type calcium currents. R-type calcium channels belong to the 'high-voltage activated' (HVA) group and are blocked by nickel. They are however insensitive to dihydropyridines (DHP). Calcium channels containing alpha-1E subunit could be involved in the modulation of firing patterns of neurons which is important for information processing. In terms of biological role, voltage-sensitive calcium channels (VSCC) mediate the entry of calcium ions into excitable cells. They are also involved in a variety of calcium-dependent processes, including muscle contraction, hormone or neurotransmitter release, gene expression, cell motility, cell division and cell death. The isoform alpha-1E gives rise to R-type calcium currents. The protein is Voltage-dependent R-type calcium channel subunit alpha-1E (CACNA1E) of Homo sapiens (Human).